The primary structure comprises 425 residues: Adenylosuccinate synthetase (425 aa).

Residues 12-18 (GDEGKGK) and 40-42 (GHT) contribute to the GTP site. Residue Asp13 is the Proton acceptor of the active site. Asp13 and Gly40 together coordinate Mg(2+). IMP contacts are provided by residues 13 to 16 (DEGK), 38 to 41 (NAGH), Thr130, Arg144, Gln225, Thr240, and Arg304. Residue His41 is the Proton donor of the active site. Position 300–306 (300–306 (ATTGRPR)) interacts with substrate. Residues Arg306, 332–334 (KLD), and 414–416 (SVG) contribute to the GTP site.

It belongs to the adenylosuccinate synthetase family. As to quaternary structure, homodimer. The cofactor is Mg(2+).

It is found in the cytoplasm. The catalysed reaction is IMP + L-aspartate + GTP = N(6)-(1,2-dicarboxyethyl)-AMP + GDP + phosphate + 2 H(+). It functions in the pathway purine metabolism; AMP biosynthesis via de novo pathway; AMP from IMP: step 1/2. Functionally, plays an important role in the de novo pathway of purine nucleotide biosynthesis. Catalyzes the first committed step in the biosynthesis of AMP from IMP. The polypeptide is Adenylosuccinate synthetase (Desulfovibrio desulfuricans (strain ATCC 27774 / DSM 6949 / MB)).